Reading from the N-terminus, the 84-residue chain is Small, acid-soluble spore protein gamma-type (84 aa).

Polar residues-rich tracts occupy residues 1–25 and 34–44; these read MANSNNFSKTNAQQVRKQNQQSAAG and ASETNAQQVRK. The disordered stretch occupies residues 1–84; the sequence is MANSNNFSKT…SAEQNKQQNS (84 aa). 2 repeats span residues 21 to 47 and 48 to 74; these read QSAAGQGQFGTEFASETNAQQVRKQNQ and QSAGQQGQFGTEFASETDAQQVRQQNQ. Composition is skewed to low complexity over residues 45-57 and 71-84; these read QNQQSAGQQGQFG and QQNQSAEQNKQQNS.

This sequence belongs to the gamma-type SASP family.

SASP are proteins degraded in the first minutes of spore germination and provide amino acids for both new protein synthesis and metabolism. These proteins may be involved in dormant spore's high resistance to UV light. The protein is Small, acid-soluble spore protein gamma-type (sspE) of Bacillus subtilis (strain 168).